The following is a 419-amino-acid chain: Serine--tRNA ligase (419 aa).

226–228 (TSE) contributes to the L-serine binding site. ATP-binding positions include 257–259 (RRE) and Val-273. Residue Glu-280 coordinates L-serine. Position 344–347 (344–347 (ELTS)) interacts with ATP. Thr-379 contacts L-serine.

It belongs to the class-II aminoacyl-tRNA synthetase family. Type-1 seryl-tRNA synthetase subfamily. As to quaternary structure, homodimer. The tRNA molecule binds across the dimer.

Its subcellular location is the cytoplasm. The enzyme catalyses tRNA(Ser) + L-serine + ATP = L-seryl-tRNA(Ser) + AMP + diphosphate + H(+). It catalyses the reaction tRNA(Sec) + L-serine + ATP = L-seryl-tRNA(Sec) + AMP + diphosphate + H(+). The protein operates within aminoacyl-tRNA biosynthesis; selenocysteinyl-tRNA(Sec) biosynthesis; L-seryl-tRNA(Sec) from L-serine and tRNA(Sec): step 1/1. Its function is as follows. Catalyzes the attachment of serine to tRNA(Ser). Is also able to aminoacylate tRNA(Sec) with serine, to form the misacylated tRNA L-seryl-tRNA(Sec), which will be further converted into selenocysteinyl-tRNA(Sec). The chain is Serine--tRNA ligase from Mycobacterium marinum (strain ATCC BAA-535 / M).